The primary structure comprises 420 residues: MKTLIARHKAGEHIGICSVCSAHPLVIEAALAFDRNSTRKVLIEATSNQVNQFGGYTGMTPADFREFVFTIADKVGFARERIILGGDHLGPNCWQQENADAAMEKSVELVKEYVRAGFSKIHLDASMSCAGDPIPLAPETVAERAAVLCFAAESVATDCQREQLSYVIGTEVPVPGGEASAIQSVHITHVEDAANTLRTHQKAFIARGLTEALTRVIAIVVQPGVEFDHSNIIHYQPQEAQPLAQWIENTRMVYEAHSTDYQTRTAYWELVRDHFAILKVGPALTFALREAIFALAQIEQELIAPENRSGCLAVIEEVMLDEPQYWKKYYRTGFNDSLLDIRYSLSDRIRYYWPHSRIKNSVDTMMVNLEGVDIPLGMISQYLPKQFERIQSGELSAIPHQLIMDKIYDVLRAYRYGCAE.

Belongs to the GatZ/KbaZ family. GatZ subfamily. In terms of assembly, forms a complex with GatY.

It participates in carbohydrate metabolism; D-tagatose 6-phosphate degradation; D-glyceraldehyde 3-phosphate and glycerone phosphate from D-tagatose 6-phosphate: step 2/2. Component of the tagatose-1,6-bisphosphate aldolase GatYZ that is required for full activity and stability of the Y subunit. Could have a chaperone-like function for the proper and stable folding of GatY. When expressed alone, GatZ does not show any aldolase activity. Is involved in the catabolism of galactitol. In Escherichia coli O9:H4 (strain HS), this protein is D-tagatose-1,6-bisphosphate aldolase subunit GatZ.